Reading from the N-terminus, the 457-residue chain is Siroheme synthase (457 aa).

The precorrin-2 dehydrogenase /sirohydrochlorin ferrochelatase stretch occupies residues 1–204 (MEIFPISLKL…DNLDIANQMM (204 aa)). NAD(+) contacts are provided by residues 22–23 (HI) and 43–44 (PD). Ser-129 bears the Phosphoserine mark. The uroporphyrinogen-III C-methyltransferase stretch occupies residues 216 to 457 (GEVYLVGAGP…VSLREQLQWL (242 aa)). Residue Pro-225 participates in S-adenosyl-L-methionine binding. Residue Asp-248 is the Proton acceptor of the active site. Lys-270 serves as the catalytic Proton donor. S-adenosyl-L-methionine is bound by residues 301 to 303 (GGD), Ile-306, 331 to 332 (TA), Met-383, and Gly-412.

In the N-terminal section; belongs to the precorrin-2 dehydrogenase / sirohydrochlorin ferrochelatase family. This sequence in the C-terminal section; belongs to the precorrin methyltransferase family.

The catalysed reaction is uroporphyrinogen III + 2 S-adenosyl-L-methionine = precorrin-2 + 2 S-adenosyl-L-homocysteine + H(+). The enzyme catalyses precorrin-2 + NAD(+) = sirohydrochlorin + NADH + 2 H(+). It catalyses the reaction siroheme + 2 H(+) = sirohydrochlorin + Fe(2+). Its pathway is cofactor biosynthesis; adenosylcobalamin biosynthesis; precorrin-2 from uroporphyrinogen III: step 1/1. It functions in the pathway cofactor biosynthesis; adenosylcobalamin biosynthesis; sirohydrochlorin from precorrin-2: step 1/1. The protein operates within porphyrin-containing compound metabolism; siroheme biosynthesis; precorrin-2 from uroporphyrinogen III: step 1/1. It participates in porphyrin-containing compound metabolism; siroheme biosynthesis; siroheme from sirohydrochlorin: step 1/1. Its pathway is porphyrin-containing compound metabolism; siroheme biosynthesis; sirohydrochlorin from precorrin-2: step 1/1. Functionally, multifunctional enzyme that catalyzes the SAM-dependent methylations of uroporphyrinogen III at position C-2 and C-7 to form precorrin-2 via precorrin-1. Then it catalyzes the NAD-dependent ring dehydrogenation of precorrin-2 to yield sirohydrochlorin. Finally, it catalyzes the ferrochelation of sirohydrochlorin to yield siroheme. This Acinetobacter baylyi (strain ATCC 33305 / BD413 / ADP1) protein is Siroheme synthase.